The primary structure comprises 382 residues: Galactokinase (382 aa).

34 to 37 (EHTD) provides a ligand contact to substrate. Position 124–130 (124–130 (GAGLSSS)) interacts with ATP. Residues serine 130 and glutamate 162 each coordinate Mg(2+). The active-site Proton acceptor is aspartate 174. Tyrosine 223 contributes to the substrate binding site.

The protein belongs to the GHMP kinase family. GalK subfamily.

It is found in the cytoplasm. The catalysed reaction is alpha-D-galactose + ATP = alpha-D-galactose 1-phosphate + ADP + H(+). The protein operates within carbohydrate metabolism; galactose metabolism. Its function is as follows. Catalyzes the transfer of the gamma-phosphate of ATP to D-galactose to form alpha-D-galactose-1-phosphate (Gal-1-P). In Salmonella agona (strain SL483), this protein is Galactokinase.